Here is a 787-residue protein sequence, read N- to C-terminus: Endonuclease MutS2 (787 aa).

331 to 338 (GPNTGGKT) is a binding site for ATP. The Smr domain maps to 711–786 (IDVRGKTSDD…EQGVTVVELK (76 aa)).

The protein belongs to the DNA mismatch repair MutS family. MutS2 subfamily. In terms of assembly, homodimer. Binds to stalled ribosomes, contacting rRNA.

Its function is as follows. Endonuclease that is involved in the suppression of homologous recombination and thus may have a key role in the control of bacterial genetic diversity. In terms of biological role, acts as a ribosome collision sensor, splitting the ribosome into its 2 subunits. Detects stalled/collided 70S ribosomes which it binds and splits by an ATP-hydrolysis driven conformational change. Acts upstream of the ribosome quality control system (RQC), a ribosome-associated complex that mediates the extraction of incompletely synthesized nascent chains from stalled ribosomes and their subsequent degradation. Probably generates substrates for RQC. This chain is Endonuclease MutS2, found in Caldicellulosiruptor bescii (strain ATCC BAA-1888 / DSM 6725 / KCTC 15123 / Z-1320) (Anaerocellum thermophilum).